Here is a 578-residue protein sequence, read N- to C-terminus: Protein O-linked-mannose beta-1,4-N-acetylglucosaminyltransferase 2 (578 aa).

Topologically, residues 1–4 (MNLP) are cytoplasmic. A helical; Signal-anchor for type II membrane protein transmembrane segment spans residues 5 to 25 (AVLNGLLVSVVAALLWKYVRL). The Lumenal segment spans residues 26 to 578 (VEHTSQLEEE…PFADVLICKT (553 aa)). N98, N275, and N541 each carry an N-linked (GlcNAc...) asparagine glycan. The region spanning 482 to 578 (RVREPKCQTS…PFADVLICKT (97 aa)) is the Fibronectin type-III domain.

The protein belongs to the glycosyltransferase 61 family.

Its subcellular location is the endoplasmic reticulum membrane. The enzyme catalyses 3-O-(alpha-D-mannosyl)-L-threonyl-[protein] + UDP-N-acetyl-alpha-D-glucosamine = 3-O-(N-acetyl-beta-D-glucosaminyl-(1-&gt;4)-alpha-D-mannosyl)-L-threonyl-[protein] + UDP + H(+). Its pathway is protein modification; protein glycosylation. O-linked mannose beta-1,4-N-acetylglucosaminyltransferase that transfers UDP-N-acetyl-D-glucosamine to the 4-position of the mannose to generate N-acetyl-D-glucosamine-beta-1,4-O-D-mannosylprotein. Involved in the biosynthesis of the phosphorylated O-mannosyl trisaccharide (N-acetylgalactosamine-beta-3-N-acetylglucosamine-beta-4-(phosphate-6-)mannose), a carbohydrate structure present in alpha-dystroglycan (DAG1), which is required for binding laminin G-like domain-containing extracellular proteins with high affinity. This Danio rerio (Zebrafish) protein is Protein O-linked-mannose beta-1,4-N-acetylglucosaminyltransferase 2 (pomgnt2).